The sequence spans 146 residues: Hemoglobin subunit beta (146 aa).

Residues 2–146 (QWTAEEKQLI…VAHALARKYH (145 aa)) enclose the Globin domain. Residues His63 and His92 each contribute to the heme b site.

It belongs to the globin family. As to quaternary structure, heterotetramer of two alpha chains and two beta chains. Red blood cells.

Its function is as follows. Involved in oxygen transport from the lung to the various peripheral tissues. The polypeptide is Hemoglobin subunit beta (HBB) (Apus apus (Common swift)).